The sequence spans 207 residues: Large ribosomal subunit protein uL4 (207 aa).

Positions 49-78 (HAVKNRSAVSGGGRKPWRQKGTGRARQGSI) are disordered.

The protein belongs to the universal ribosomal protein uL4 family. As to quaternary structure, part of the 50S ribosomal subunit.

Functionally, one of the primary rRNA binding proteins, this protein initially binds near the 5'-end of the 23S rRNA. It is important during the early stages of 50S assembly. It makes multiple contacts with different domains of the 23S rRNA in the assembled 50S subunit and ribosome. Its function is as follows. Forms part of the polypeptide exit tunnel. This chain is Large ribosomal subunit protein uL4, found in Streptococcus uberis (strain ATCC BAA-854 / 0140J).